The following is a 335-amino-acid chain: MGLAATKTKQRFGLDPRNTTWSNDKSRFGHKYLEKLGWEPGKGLGHASHAMSTHIKVTIKDDTMGLGAKLKKKEKKDEFDSGECAGLDVFQRILGRLNGKEEVIADELEKQRKENIINGKWGIHFVKGEVLSSTWDADTMQLKSYSYDKKEITADDAEDAKVSGKHRDRKSRAKREKSNNAALKEKCRDIDRTRKSKRKEKEQEKEKNREKKHNGKEHKEKEHKEKKDKKDKKEKKEKKEKKEKKEKKHKEKSNKRLRSSDSIDDPEATKPSKKSKTKAADSDNVTRDSMLQPRASAASPPPTISTRLSVRSKWIRQKRAAVMDPKALNEIFMVT.

A G-patch domain is found at 25–71; the sequence is KSRFGHKYLEKLGWEPGKGLGHASHAMSTHIKVTIKDDTMGLGAKLK. A disordered region spans residues 155 to 310; sequence DDAEDAKVSG…PPTISTRLSV (156 aa). Residues 163-175 show a composition bias toward basic residues; it reads SGKHRDRKSRAKR. Basic and acidic residues predominate over residues 183 to 209; that stretch reads LKEKCRDIDRTRKSKRKEKEQEKEKNR. A compositionally biased stretch (basic residues) spans 226–257; sequence KKDKKDKKEKKEKKEKKEKKEKKHKEKSNKRL.

The protein belongs to the PINX1 family.

Its subcellular location is the nucleus. The protein resides in the nucleolus. Its function is as follows. Involved in rRNA-processing at A0, A1 and A2 sites and negatively regulates telomerase. This Eremothecium gossypii (strain ATCC 10895 / CBS 109.51 / FGSC 9923 / NRRL Y-1056) (Yeast) protein is Protein PXR1 (PXR1).